A 1135-amino-acid polypeptide reads, in one-letter code: MASEEASLRALESLMSEFFHNGTSNERKREIESLLNNFAQQLGAWRFCFYFLSQSQNDYVLMYSLSVFENMINKMWLGVPSQEKMEIRNSLPKLLLSQHKSLPSFICNKLCKVIVDMGRQDWPMFYHDFFTNILQLIQTPSTTPLGLIMLKTASEELACPREDLIVARKEELRKLLLEQVPTVLDLLTGVLESIWDKHSITAATPPPSPTASDTDDLLSNLIHTPNLTKQLSQPPPSLEAESERVCALALECLSHLFSWIPLSASITPSLLTTIFQFARLGCDARSRQTNSVTTNTTASVVNGRSSSPPTAPARDLARLGVLAMSCINELMCKNCVPLEFQEYLLRVCQQTFYLLQRITRETNAHSVRSRFEELDESYVEKFTDFLRLFVSVHLRRIESNAQFPLLEFLTLLFKYTFHQPTREGYLSCLDIWAQFLDYLTNKIRNRLEDRDAIIGRYEDALVLLLNEVLNRIQFRYNQTQLEELDDETLDDDQQTEWQRYLRHSLEVVAKIMDLLPTHAFSKLFAALQENLNVYLGLQRCLVTNGNDQRLNVTAENDCRRLHCSLRDLSSLLQAVGRLAEYFIGDMFGARFNDALTVVERLVEVTLYGSRIKLYNMETAVPSVLKPDLIDVHAQSLAALQAYSHWLARYYSEVQRQNPEQFISIISTAMEALPPLISTKVQEKLLLSACHLLVSIATTVRPMFLLNIPSVQKVFSRVTDSSAQRLPEEAQVLLCRALSNVLLLPWPNVPEGEQQWAERSSHHSNLLNALTRDYRLLKGSSLPQRKGQLEATKRVICQTLGVLRDIVENISGEGTKSRQICYQSLQESAQLSLTLFPAYIHQSDVTEEMLSFFLALFQGLRVQMGAPFTEQIIQTFLNMFTREQLAESILQEGSAGCHVVEKFLKILQVVVQEPGQSFKPFLPSILSLCMEQLYPIIAERPSPDVKAELFELLFQLLHHNWRYFYRSSVLASVHRDGSDEPMENQAQFIVVMQAFGQSFLQPDIHIFRQNLSYLETLNSKHKLYHKKLFQTGMLPQFVSVLLQVLIHKSHDLLQEEIGIAVYNMASVDFSTFFSTFLPEFLTGCQGLDTSQKSVLARNFKMERDLPSFTQSVHRLVNDLRYYRLCNDSLPPGTVKL.

The region spanning 31 to 97 (IESLLNNFAQ…RNSLPKLLLS (67 aa)) is the Importin N-terminal domain.

It belongs to the exportin family. As to expression, expressed during meiotic maturation 2 hours after germinal vesicle break down (GVBD) and in unfertilized and fertilized eggs, but not in oocytes (at protein level). Expressed in somatic cells, in oocytes, during meiotic maturation and in unfertilized and fertilized eggs.

The protein resides in the nucleus. The protein localises to the cytoplasm. Mediates the nuclear export of actin and profilin-actin complexes in somatic cells. Oocyte nuclei lack active actin export. The sequence is that of Exportin-6-A (xpo6-a) from Xenopus laevis (African clawed frog).